The sequence spans 431 residues: Galanin-like G-protein coupled receptor npr-9 (431 aa).

Topologically, residues 1 to 34 (MEFENLTKEEMEQLQKIYDDTISFERKIGIIIPT) are extracellular. N-linked (GlcNAc...) asparagine glycosylation occurs at N5. The chain crosses the membrane as a helical span at residues 35–55 (IFAVIILVGLVGNALVVIVAF). The Cytoplasmic portion of the chain corresponds to 56–66 (GRQMRNSTNTL). Residues 67–87 (IIGLAISDLMFLLLCVPFTAV) traverse the membrane as a helical segment. Residues 88–101 (DYAAPTWIFPEWTC) are Extracellular-facing. The cysteines at positions 101 and 182 are disulfide-linked. The helical transmembrane segment at 102–124 (SMINFFQHTSAYCSVWTLTLMAL) threads the bilayer. At 125–143 (DRYLAVVYPVESMTLRTPR) the chain is on the cytoplasmic side. A helical transmembrane segment spans residues 144–164 (NTVIALCFIYIIIIASQIPVG). Residues 165-203 (RMHGIYVYDFIMEKRSTCAILTIATAEATPTMARTYFMT) lie on the Extracellular side of the membrane. Residues 204–224 (FNVFGYVLPLGISVVLYGLML) traverse the membrane as a helical segment. The Cytoplasmic segment spans residues 225-268 (RKLWDMPRPGNSQSVGGRNLTNRDSGSSIRRRPEATAAKRKVTR). The span at 235-252 (NSQSVGGRNLTNRDSGSS) shows a compositional bias: polar residues. The tract at residues 235–257 (NSQSVGGRNLTNRDSGSSIRRRP) is disordered. A helical transmembrane segment spans residues 269–289 (LVLCVLITWALCWLPLNVCFF). Residues 290-298 (MSGLAYPEP) are Extracellular-facing. Residues 299–319 (LVISHGVIMVIVQIASQVLAY) traverse the membrane as a helical segment. The Cytoplasmic portion of the chain corresponds to 320–431 (TNSCLNPILY…RSKSTRSYNL (112 aa)). A compositionally biased stretch (polar residues) spans 393 to 414 (SLLKDNSSSATSVQPLRTSIQA). A disordered region spans residues 393-431 (SLLKDNSSSATSVQPLRTSIQAKKTKNIGRSKSTRSYNL). Residues 415–425 (KKTKNIGRSKS) show a composition bias toward basic residues.

The protein belongs to the G-protein coupled receptor 1 family. As to expression, exclusively expressed in the AIB interneuron.

It is found in the cell membrane. In terms of biological role, neuropeptide that controls movement such as roaming, foraging and backwards locomotion or 'reversals' in response to environmental cues such as food availability or volatile odorants such as octanol. Antagonizes AIB interneuron activity to control bacterial colonization and may negatively regulate the expression of immunity-related genes such as pqm-1 and dod-22 in response to infection by P.aeruginosa. The polypeptide is Galanin-like G-protein coupled receptor npr-9 (Caenorhabditis elegans).